The chain runs to 223 residues: Noggin-3 (223 aa).

An N-terminal signal peptide occupies residues 1 to 23; that stretch reads MDNIPYFLATVLIFSLGFRIEEG. 2 N-linked (GlcNAc...) asparagine glycosylation sites follow: Asn-60 and Asn-93.

This sequence belongs to the noggin family. In terms of assembly, homodimer; disulfide-linked.

It localises to the secreted. Its function is as follows. May function as an inhibitor of bone morphogenetic proteins (BMP) signaling during later stages of development including late phases of dorsoventral patterning, to refine the early pattern set up by the interaction of chordino and BMP2/4. Not involved in organizer function or early phases of dorsoventral pattern formation. The polypeptide is Noggin-3 (nog3) (Danio rerio (Zebrafish)).